A 192-amino-acid polypeptide reads, in one-letter code: SRP-independent targeting protein 2 homolog (192 aa).

The next 2 helical transmembrane spans lie at 16-36 (ILTF…ILRF) and 102-122 (WILI…YLLV). The disordered stretch occupies residues 149–192 (LNQPPQQQQQQQQQQHQQHATPSEPVLSKRQQKLRKKAAKYSRP). Positions 151–167 (QPPQQQQQQQQQQHQQH) are enriched in low complexity. Residues 178–192 (RQQKLRKKAAKYSRP) show a composition bias toward basic residues.

It belongs to the TMEM208 family.

The protein localises to the endoplasmic reticulum membrane. May function in a SRP (signal recognition particle) and GET (guided entry of tail-anchored proteins) independent pathway for targeting a broad range of substrate proteins to the endoplasmic reticulum. Has a role in meiosis. The polypeptide is SRP-independent targeting protein 2 homolog (Schizosaccharomyces pombe (strain 972 / ATCC 24843) (Fission yeast)).